A 700-amino-acid chain; its full sequence is Phosphoribosylformylglycinamidine synthase subunit PurL (700 aa).

H34 is an active-site residue. Residue Y37 participates in ATP binding. E79 is a binding site for Mg(2+). Substrate-binding positions include 80-83 (SHNH) and R102. Catalysis depends on H81, which acts as the Proton acceptor. D103 is a binding site for Mg(2+). Q227 is a binding site for substrate. Residue D255 coordinates Mg(2+). 299 to 301 (ESQ) contributes to the substrate binding site. The ATP site is built by D476 and G513. N514 contacts Mg(2+). Substrate is bound at residue S516.

The protein belongs to the FGAMS family. Monomer. Part of the FGAM synthase complex composed of 1 PurL, 1 PurQ and 2 PurS subunits.

It localises to the cytoplasm. The enzyme catalyses N(2)-formyl-N(1)-(5-phospho-beta-D-ribosyl)glycinamide + L-glutamine + ATP + H2O = 2-formamido-N(1)-(5-O-phospho-beta-D-ribosyl)acetamidine + L-glutamate + ADP + phosphate + H(+). The protein operates within purine metabolism; IMP biosynthesis via de novo pathway; 5-amino-1-(5-phospho-D-ribosyl)imidazole from N(2)-formyl-N(1)-(5-phospho-D-ribosyl)glycinamide: step 1/2. Functionally, part of the phosphoribosylformylglycinamidine synthase complex involved in the purines biosynthetic pathway. Catalyzes the ATP-dependent conversion of formylglycinamide ribonucleotide (FGAR) and glutamine to yield formylglycinamidine ribonucleotide (FGAM) and glutamate. The FGAM synthase complex is composed of three subunits. PurQ produces an ammonia molecule by converting glutamine to glutamate. PurL transfers the ammonia molecule to FGAR to form FGAM in an ATP-dependent manner. PurS interacts with PurQ and PurL and is thought to assist in the transfer of the ammonia molecule from PurQ to PurL. In Halobacterium salinarum (strain ATCC 29341 / DSM 671 / R1), this protein is Phosphoribosylformylglycinamidine synthase subunit PurL.